A 204-amino-acid polypeptide reads, in one-letter code: Cytochrome c biogenesis ATP-binding export protein CcmA (204 aa).

The region spanning L2–L202 is the ABC transporter domain. Position 34–41 (G34–T41) interacts with ATP.

It belongs to the ABC transporter superfamily. CcmA exporter (TC 3.A.1.107) family. As to quaternary structure, the complex is composed of two ATP-binding proteins (CcmA) and two transmembrane proteins (CcmB).

Its subcellular location is the cell inner membrane. It catalyses the reaction heme b(in) + ATP + H2O = heme b(out) + ADP + phosphate + H(+). Part of the ABC transporter complex CcmAB involved in the biogenesis of c-type cytochromes; once thought to export heme, this seems not to be the case, but its exact role is uncertain. Responsible for energy coupling to the transport system. The sequence is that of Cytochrome c biogenesis ATP-binding export protein CcmA from Aliivibrio fischeri (strain ATCC 700601 / ES114) (Vibrio fischeri).